A 121-amino-acid chain; its full sequence is Ribonuclease P protein component (121 aa).

It belongs to the RnpA family. In terms of assembly, consists of a catalytic RNA component (M1 or rnpB) and a protein subunit.

The enzyme catalyses Endonucleolytic cleavage of RNA, removing 5'-extranucleotides from tRNA precursor.. In terms of biological role, RNaseP catalyzes the removal of the 5'-leader sequence from pre-tRNA to produce the mature 5'-terminus. It can also cleave other RNA substrates such as 4.5S RNA. The protein component plays an auxiliary but essential role in vivo by binding to the 5'-leader sequence and broadening the substrate specificity of the ribozyme. The sequence is that of Ribonuclease P protein component from Neisseria gonorrhoeae (strain ATCC 700825 / FA 1090).